The primary structure comprises 335 residues: Holliday junction branch migration complex subunit RuvB (335 aa).

Residues 1–183 (MDERIISSET…FGVIDHLEFY (183 aa)) are large ATPase domain (RuvB-L). ATP is bound by residues Leu22, Arg23, Gly64, Lys67, Thr68, Thr69, 130–132 (EDY), Arg173, Tyr183, and Arg220. Thr68 is a Mg(2+) binding site. The interval 184-254 (TEEQLTEIVL…LAKEALTLLQ (71 aa)) is small ATPAse domain (RuvB-S). A head domain (RuvB-H) region spans residues 257-335 (PRGLDTIDQK…HLGISYEKEV (79 aa)). The DNA site is built by Arg293, Arg312, and Arg317.

Belongs to the RuvB family. In terms of assembly, homohexamer. Forms an RuvA(8)-RuvB(12)-Holliday junction (HJ) complex. HJ DNA is sandwiched between 2 RuvA tetramers; dsDNA enters through RuvA and exits via RuvB. An RuvB hexamer assembles on each DNA strand where it exits the tetramer. Each RuvB hexamer is contacted by two RuvA subunits (via domain III) on 2 adjacent RuvB subunits; this complex drives branch migration. In the full resolvosome a probable DNA-RuvA(4)-RuvB(12)-RuvC(2) complex forms which resolves the HJ.

Its subcellular location is the cytoplasm. The catalysed reaction is ATP + H2O = ADP + phosphate + H(+). Its function is as follows. The RuvA-RuvB-RuvC complex processes Holliday junction (HJ) DNA during genetic recombination and DNA repair, while the RuvA-RuvB complex plays an important role in the rescue of blocked DNA replication forks via replication fork reversal (RFR). RuvA specifically binds to HJ cruciform DNA, conferring on it an open structure. The RuvB hexamer acts as an ATP-dependent pump, pulling dsDNA into and through the RuvAB complex. RuvB forms 2 homohexamers on either side of HJ DNA bound by 1 or 2 RuvA tetramers; 4 subunits per hexamer contact DNA at a time. Coordinated motions by a converter formed by DNA-disengaged RuvB subunits stimulates ATP hydrolysis and nucleotide exchange. Immobilization of the converter enables RuvB to convert the ATP-contained energy into a lever motion, pulling 2 nucleotides of DNA out of the RuvA tetramer per ATP hydrolyzed, thus driving DNA branch migration. The RuvB motors rotate together with the DNA substrate, which together with the progressing nucleotide cycle form the mechanistic basis for DNA recombination by continuous HJ branch migration. Branch migration allows RuvC to scan DNA until it finds its consensus sequence, where it cleaves and resolves cruciform DNA. In Listeria monocytogenes serovar 1/2a (strain ATCC BAA-679 / EGD-e), this protein is Holliday junction branch migration complex subunit RuvB.